The following is a 3674-amino-acid chain: Dystrophin (3674 aa).

Residues 1–236 (MSEVSSDERE…YVTSLFQVLP (236 aa)) form an actin-binding region. Calponin-homology (CH) domains lie at 11-115 (DVQK…LHWQ) and 130-236 (TNSE…QVLP). The segment at 59 to 68 (PKEKGSTRVH) is ANK2- and ANK-3 binding. Polar residues predominate over residues 306-318 (SDPTRSPFPSQRL). Residues 306–325 (SDPTRSPFPSQRLESPEDKS) are disordered. Spectrin repeat units follow at residues 335–443 (VNLD…NLHK), 444–552 (VLMD…LLQD), 555–663 (LKWQ…QISQ), 715–824 (EIRK…WLEY), 826–930 (NRII…ELQI), 939–1041 (RYQE…KLEE), 1044–1150 (AKLR…ALKG), 1153–1259 (DKTI…TLEE), 1262–1363 (ACWH…LLEQ), 1364–1459 (SIQS…LFQK), 1464–1564 (EQRL…QLEK), 1567–1672 (KLSR…LLLE), 1675–1774 (KHME…KASI), 1775–1870 (PLKE…KALE), 1873–1975 (HQWY…TVHE), 1988–2097 (EISY…KFDR), 2100–2204 (EKWR…RLEE), 2207–2314 (NILS…EIEA), 2315–2412 (HIKD…LRAK), 2464–2566 (FNRA…QLNE), 2569–2675 (KDST…VLEE), 2678–2791 (RLLQ…HLEA), 2797–2919 (KRLH…RKID), and 2924–3029 (RLQE…QLHE). An interaction with SYNM region spans residues 1411 to 1909 (SDLTSHEISL…PEPQDEKKIK (499 aa)). Residues 3044–3077 (TSVQGPWERAISPNKVPYYINHETQTTCWDHPKM) enclose the WW domain. The interval 3047–3397 (QGPWERAISP…TVLEGDNMET (351 aa)) is interaction with SYNM. The ZZ-type; degenerate zinc-finger motif lies at 3297–3353 (KHQAKCNICKECPIIGFRYRSLKHFNYDICQSCFFSGRVAKGHKMHYPMVEYCTPTT). C3302, C3305, C3326, and C3329 together coordinate Zn(2+). The segment at 3455–3507 (DDEHLLIQHYCQSLNQDSPLSQPRSPAQILISLESEERGELERILADLEEENR) is binds to SNTB1. Residues S3472, S3479, and S3489 each carry the phosphoserine modification. Disordered stretches follow at residues 3517-3543 (KQQH…QSPR) and 3590-3674 (QAEA…EDTM). 2 stretches are compositionally biased toward polar residues: residues 3596–3615 (NGTT…SSQP) and 3651–3662 (QLNNSFPSSRGR). Residues S3601, S3602, S3606, S3612, S3613, and S3655 each carry the phosphoserine modification.

In terms of assembly, interacts with SYNM. Interacts with the syntrophins SNTG1 and SNTG2. Interacts with KRT19. Component of the dystrophin-associated glycoprotein complex which is composed of three subcomplexes: a cytoplasmic complex comprised of DMD (or UTRN), DTNA and a number of syntrophins, such as SNTB1, SNTB2, SNTG1 and SNTG2, the transmembrane dystroglycan complex, and the sarcoglycan-sarcospan complex. Interacts with DAG1 (betaDAG1) with DMD; the interaction is inhibited by phosphorylation on the PPXY motif of DAG1. Interacts with SYNM; SNTA1 and SNTB1. Interacts with CMYA5. Directly interacts with ANK2 and ANK3; these interactions do not interfere with betaDAG1-binding and are necessary for proper localization in muscle cells. Identified in a dystroglycan complex that contains at least PRX, DRP2, UTRN, DMD and DAG1. Interacts with DTNB. Interacts with PGM5; the interaction is direct. Interacts with NOS1; localizes NOS1 to sarcolemma in muscle cells. As to expression, in the retina, expressed in the outer plexiform layer (OPL) and around the blood vessels. Also observed at the vitreal border of the retina corresponding to the inner limiting membrane (ILM). Presynaptically localized in cone pedicles and postsynaptically in bipolar cells (at protein level).

It is found in the cell membrane. Its subcellular location is the sarcolemma. The protein resides in the cytoplasm. The protein localises to the cytoskeleton. It localises to the postsynaptic cell membrane. Functionally, anchors the extracellular matrix to the cytoskeleton via F-actin. Ligand for dystroglycan. Component of the dystrophin-associated glycoprotein complex which accumulates at the neuromuscular junction (NMJ) and at a variety of synapses in the peripheral and central nervous systems and has a structural function in stabilizing the sarcolemma. Also implicated in signaling events and synaptic transmission. The sequence is that of Dystrophin from Sus scrofa (Pig).